The following is a 238-amino-acid chain: U2 small nuclear ribonucleoprotein A' (238 aa).

4 LRR repeats span residues K19–K40, T42–K63, N64–P84, and H89–C110. The LRRCT domain occupies N123–L161.

Belongs to the U2 small nuclear ribonucleoprotein A family. As to quaternary structure, associated with the spliceosome.

The protein localises to the nucleus. In terms of biological role, involved in pre-mRNA splicing. In Debaryomyces hansenii (strain ATCC 36239 / CBS 767 / BCRC 21394 / JCM 1990 / NBRC 0083 / IGC 2968) (Yeast), this protein is U2 small nuclear ribonucleoprotein A' (LEA1).